The primary structure comprises 223 residues: Endonuclease NucS (223 aa).

The protein belongs to the NucS endonuclease family.

It localises to the cytoplasm. Cleaves both 3' and 5' ssDNA extremities of branched DNA structures. The sequence is that of Endonuclease NucS from Mycobacterium sp. (strain JLS).